The following is a 222-amino-acid chain: Translation initiation factor 6 (222 aa).

Belongs to the eIF-6 family.

Its function is as follows. Binds to the 50S ribosomal subunit and prevents its association with the 30S ribosomal subunit to form the 70S initiation complex. This chain is Translation initiation factor 6, found in Methanothermobacter thermautotrophicus (strain ATCC 29096 / DSM 1053 / JCM 10044 / NBRC 100330 / Delta H) (Methanobacterium thermoautotrophicum).